Here is a 233-residue protein sequence, read N- to C-terminus: Ribosome maturation protein SDO1 homolog (233 aa).

It belongs to the SDO1/SBDS family.

The protein is Ribosome maturation protein SDO1 homolog of Aeropyrum pernix (strain ATCC 700893 / DSM 11879 / JCM 9820 / NBRC 100138 / K1).